A 154-amino-acid polypeptide reads, in one-letter code: Large ribosomal subunit protein uL13 (154 aa).

The protein belongs to the universal ribosomal protein uL13 family. Part of the 50S ribosomal subunit.

Functionally, this protein is one of the early assembly proteins of the 50S ribosomal subunit, although it is not seen to bind rRNA by itself. It is important during the early stages of 50S assembly. This chain is Large ribosomal subunit protein uL13, found in Brucella canis (strain ATCC 23365 / NCTC 10854 / RM-666).